The primary structure comprises 91 residues: YcgL domain-containing protein ESA_01460 (91 aa).

In terms of domain architecture, YcgL spans 1 to 85 (MFCVIYRSAR…PPENLLKQHL (85 aa)).

In Cronobacter sakazakii (strain ATCC BAA-894) (Enterobacter sakazakii), this protein is YcgL domain-containing protein ESA_01460.